Consider the following 213-residue polypeptide: MGRNKKKKRDGDDRRPRLVLSFDEEKRREYLTGFHKRKVERKKAAIEEIKQRLKEEQRKLREERHQEYLKMLAEREEALEEADELDRLVTAKTESVQYDHPNHTVTVTTISDLDLSGARLLGLTPPEGGAGDRSEEEASSTEKPTKALPRKSRDPLLSQRISSLTASLHAHSRKKVKRKHPRRAQDSKKPPRAPRTSKAQRRRLTGKARHSGE.

Residues 33–96 (GFHKRKVERK…RLVTAKTESV (64 aa)) are a coiled coil. The disordered stretch occupies residues 118 to 213 (ARLLGLTPPE…LTGKARHSGE (96 aa)). 2 stretches are compositionally biased toward basic residues: residues 170–182 (AHSR…KHPR) and 198–213 (KAQR…HSGE).

It belongs to the RRP17 family. As to quaternary structure, interacts with KIAA1191.

It is found in the nucleus. Its subcellular location is the nucleolus. The protein localises to the cytoplasm. Multifunctional RNA binding protein that plays a role in RNA metabolism and DNA maintenance. Participates in the resolution of DNA stress and the maintenance of genome integrity by localizing to sites of DNA insults. Also plays a role in proper nucleolar organization by limiting nucleolar size and regulating nucleolar number. Mechanistically, regulates the nucleolar levels of fibrillarin and nucleolin, two key players in pre-rRNA processing and ribosome assembly. In Homo sapiens (Human), this protein is Nucleolar protein 12 (NOL12).